The following is a 2004-amino-acid chain: Immunoglobulin A1 protease (2004 aa).

The signal sequence occupies residues 1-42; the sequence is MEKYFGEKQERFSFRKLSVGLVSATISSLFFMSVLASSSVDA. Positions 43-99 are excised as a propeptide; it reads QETAGVHYKYVADSELSSEEKKQLVYDIPTYVENDDETYYLVYKLNSQNQLAELPNT. The LPXTG sorting signal signature appears at 96–100; sequence LPNTG. At Thr-99 the chain carries Pentaglycyl murein peptidoglycan amidated threonine. A run of 2 helical transmembrane segments spans residues 106-125 and 132-154; these read QALV…FAVS and KTVL…VHAL. Over 155-2004 the chain is Extracellular; that stretch reads ENHLLLNYNT…FRSSIFENKK (1850 aa). Disordered stretches follow at residues 194-213, 235-305, 373-394, and 422-720; these read TTSE…PTKQ, QEQT…NPQD, EIVS…TKKT, and PELP…PEKT. Composition is skewed to polar residues over residues 197–213 and 235–246; these read ESEV…PTKQ and QEQTPVSSTKPT. Residues 276–296 are compositionally biased toward basic and acidic residues; it reads LAEHKNLETKKEEKISPKEKT. Residues 314–393 enclose the G5 domain; it reads KPELLYREET…PRIVEKGTKK (80 aa). 3 consecutive repeat copies span residues 419 to 435, 436 to 452, and 453 to 469. A 3 X 17 AA approximate tandem repeats region spans residues 419-469; it reads AIQPELPEAVVSDKGEPEVQPTLPEAVVTDKGETEVQPESPDTVVSDKGEP. Residues 485 to 511 are compositionally biased toward basic and acidic residues; that stretch reads VKPETPVEKTKEQGPEKTEEVPVKPTE. Polar residues-rich tracts occupy residues 516–529 and 538–572; these read NPNE…SIQE and EEST…SVGE. Positions 574–591 are enriched in basic and acidic residues; the sequence is NKPEHNDSKNENSEKTVE. 2 stretches are compositionally biased toward polar residues: residues 618–639 and 648–681; these read EETQ…SNKP and ESNQ…PSNG. A compositionally biased stretch (low complexity) spans 682-699; it reads NSTEDVSTESNTSNSNGN. Over residues 700 to 720 the composition is skewed to basic and acidic residues; that stretch reads EEIKQENELDPDKKVEEPEKT. His-1645 provides a ligand contact to Zn(2+). Residue Glu-1646 is part of the active site. Zn(2+)-binding residues include His-1649 and Glu-1669.

It belongs to the peptidase M26 family. Zn(2+) is required as a cofactor. Post-translationally, the Gram-positive cell-wall anchor motif LPXTG is located in the N-terminal part, in contrast to such motifs in other known streptococcal and staphylococcal proteins. The protease could be cleaved by the sortase and anchored in the membrane via the two potential N-terminal transmembrane domains, whereas the propeptide located prior to the LPXTG motif would remain attached to the cell wall peptidoglycan by an amide bond.

The protein localises to the secreted. The protein resides in the cell wall. It is found in the membrane. It carries out the reaction Cleavage of Pro-|-Thr bond in the hinge region of the heavy chain of human IgA.. In terms of biological role, zinc metalloproteinase which cleaves human immunoglobulin A1 (IgA1) in the hinge region, rendering it less efficient in coating the surface of colonizing or invading pneumococci. Strongly contributes to virulence in mice. May be responsible for pneumococcal infection and is potentially involved in distinct stages of pneumococcal disease. The polypeptide is Immunoglobulin A1 protease (iga) (Streptococcus pneumoniae serotype 4 (strain ATCC BAA-334 / TIGR4)).